The sequence spans 333 residues: MKNNYTSLKSPLDEEDELKTDHEIDLEKGPLPEYDSEEEGALPPYSDHALVNNPPNTHRENHSSGTTDNSSPLLIKLLISFTSIILFNAPAVCYLKYKDAFFKNYGAVEWTLFGFWCFVCTLALIFLTYFYETWTKAVKVTVISLAQCVKVTAVFLAKCVKVTAVGLYNSREKWVVIIWLLWVVICYTLFLRAKFGNLNLDKALICSTCSISAALLLFLLYVRLPFWTLKHMFSGLFQVLGVQSCVVIVQKGLMHLFDKHIDGTGYEIEASSLFVIGNFLFFYEMECPGALKRMPKFIRNGIASFLGGIANAIGGANDNNDIPLEETEAESEV.

Residues 1-69 are disordered; it reads MKNNYTSLKS…ENHSSGTTDN (69 aa). Basic and acidic residues predominate over residues 19–30; that stretch reads KTDHEIDLEKGP. The next 4 membrane-spanning stretches (helical) occupy residues 73-95, 108-130, 174-191, and 204-226; these read LLIKLLISFTSIILFNAPAVCYL, VEWTLFGFWCFVCTLALIFLTYF, WVVIIWLLWVVICYTLFL, and LICSTCSISAALLLFLLYVRLPF.

This sequence belongs to the WTF family. In terms of assembly, homomer. Interacts with other proteins that exhibit high sequence similarity.

Its subcellular location is the spore membrane. The protein resides in the vacuole membrane. Its function is as follows. Acts as a suppressor component of the dual wtf meiotic drive system, and can suppress but not confer meiotic drive by compatible poisons. Wtf meiotic drive systems promote unequal transmission of alleles from the parental zygote to progeny spores by encoding a poison and an antidote from the same locus; the poison is trans-acting and forms toxic aggregates in all spores within an ascus, wherease the antidote is spore-specific and targets aggregates for degradation by the vacuole. Meiotic drive by wtf systems therefore lead to poisoning of all progeny that do not inherit the dual poison/antidote allele, or express a compatible antidote. This chain is Meiotic drive suppressor wtf9, found in Schizosaccharomyces pombe (strain 972 / ATCC 24843) (Fission yeast).